The following is a 101-amino-acid chain: Ubiquitin-related modifier 1 homolog (101 aa).

The residue at position 101 (glycine 101) is a 1-thioglycine. Glycine 101 participates in a covalent cross-link: Glycyl lysine isopeptide (Gly-Lys) (interchain with K-? in acceptor proteins).

This sequence belongs to the URM1 family. As to quaternary structure, interacts with cer. C-terminal thiocarboxylation occurs in 2 steps, it is first acyl-adenylated (-COAMP) via the hesA/moeB/thiF part of the MOCS3 homolog, then thiocarboxylated (-COSH) via the rhodanese domain of the MOCS3 homolog.

The protein resides in the cytoplasm. The protein operates within tRNA modification; 5-methoxycarbonylmethyl-2-thiouridine-tRNA biosynthesis. Acts as a sulfur carrier required for 2-thiolation of mcm(5)S(2)U at tRNA wobble positions of cytosolic tRNA(Lys), tRNA(Glu) and tRNA(Gln). Serves as sulfur donor in tRNA 2-thiolation reaction by being thiocarboxylated (-COSH) at its C-terminus by MOCS3. The sulfur is then transferred to tRNA to form 2-thiolation of mcm(5)S(2)U. Also acts as a ubiquitin-like protein (UBL) that is covalently conjugated via an isopeptide bond to lysine residues of target proteins such as Prx2/Jafrac1, Ciao1, Eip71CD and GILT1. The thiocarboxylated form serves as substrate for conjugation and oxidative stress specifically induces the formation of UBL-protein conjugates. This chain is Ubiquitin-related modifier 1 homolog, found in Drosophila yakuba (Fruit fly).